Consider the following 664-residue polypeptide: DNA ligase (664 aa).

Residues D31–D35, S80–L81, and E110 contribute to the NAD(+) site. Catalysis depends on K112, which acts as the N6-AMP-lysine intermediate. Positions 133 and 169 each coordinate NAD(+). Residues L237 to I257 form the BRCT 1 domain. NAD(+) contacts are provided by K284 and K308. Positions 402, 405, 420, and 426 each coordinate Zn(2+). In terms of domain architecture, BRCT 2 spans N586–E664.

Belongs to the NAD-dependent DNA ligase family. LigA subfamily. It depends on Mg(2+) as a cofactor. The cofactor is Mn(2+).

The catalysed reaction is NAD(+) + (deoxyribonucleotide)n-3'-hydroxyl + 5'-phospho-(deoxyribonucleotide)m = (deoxyribonucleotide)n+m + AMP + beta-nicotinamide D-nucleotide.. Its function is as follows. DNA ligase that catalyzes the formation of phosphodiester linkages between 5'-phosphoryl and 3'-hydroxyl groups in double-stranded DNA using NAD as a coenzyme and as the energy source for the reaction. It is essential for DNA replication and repair of damaged DNA. The polypeptide is DNA ligase (Christiangramia forsetii (strain DSM 17595 / CGMCC 1.15422 / KT0803) (Gramella forsetii)).